Here is a 253-residue protein sequence, read N- to C-terminus: Triosephosphate isomerase (253 aa).

15 to 17 (NWK) serves as a coordination point for substrate. His101 (electrophile) is an active-site residue. Glu171 (proton acceptor) is an active-site residue. Residues Gly177, Ser216, and 237-238 (GG) each bind substrate.

This sequence belongs to the triosephosphate isomerase family. As to quaternary structure, homodimer.

It localises to the cytoplasm. The catalysed reaction is D-glyceraldehyde 3-phosphate = dihydroxyacetone phosphate. The protein operates within carbohydrate biosynthesis; gluconeogenesis. It functions in the pathway carbohydrate degradation; glycolysis; D-glyceraldehyde 3-phosphate from glycerone phosphate: step 1/1. In terms of biological role, involved in the gluconeogenesis. Catalyzes stereospecifically the conversion of dihydroxyacetone phosphate (DHAP) to D-glyceraldehyde-3-phosphate (G3P). The protein is Triosephosphate isomerase of Caulobacter vibrioides (strain ATCC 19089 / CIP 103742 / CB 15) (Caulobacter crescentus).